A 445-amino-acid polypeptide reads, in one-letter code: KICSTOR subunit 2 (445 aa).

Belongs to the KICS2 family. As to quaternary structure, part of the KICSTOR complex composed of KPTN, ITFG2, KICS2 and SZT2. SZT2 probably serves as a link between the other three proteins in the KICSTOR complex and may mediate the direct interaction with the GATOR complex via GATOR1. The KICSTOR complex interacts directly with the GATOR1 complex and most probably indirectly with the GATOR2 complex in an amino acid-independent manner.

The protein localises to the lysosome membrane. In terms of biological role, as part of the KICSTOR complex functions in the amino acid-sensing branch of the TORC1 signaling pathway. Recruits, in an amino acid-independent manner, the GATOR1 complex to the lysosomal membranes and allows its interaction with GATOR2 and the RAG GTPases. Functions upstream of the RAG GTPases and is required to negatively regulate mTORC1 signaling in absence of amino acids. In absence of the KICSTOR complex mTORC1 is constitutively localized to the lysosome and activated. The KICSTOR complex is also probably involved in the regulation of mTORC1 by glucose. This Homo sapiens (Human) protein is KICSTOR subunit 2.